The following is a 243-amino-acid chain: Exosome complex component Rrp41 (243 aa).

The protein belongs to the RNase PH family. Rrp41 subfamily. In terms of assembly, component of the archaeal exosome complex. Forms a hexameric ring-like arrangement composed of 3 Rrp41-Rrp42 heterodimers. The hexameric ring associates with a trimer of Rrp4 and/or Csl4 subunits.

It localises to the cytoplasm. Its function is as follows. Catalytic component of the exosome, which is a complex involved in RNA degradation. Has 3'-&gt;5' exoribonuclease activity. Can also synthesize heteromeric RNA-tails. In Sulfolobus acidocaldarius (strain ATCC 33909 / DSM 639 / JCM 8929 / NBRC 15157 / NCIMB 11770), this protein is Exosome complex component Rrp41.